Reading from the N-terminus, the 217-residue chain is Adenylate kinase (217 aa).

Gly-10–Thr-15 lines the ATP pocket. An NMP region spans residues Ala-30 to Val-59. AMP contacts are provided by residues Thr-31, Arg-36, Leu-57–Val-59, Gly-85–Arg-88, and Gln-92. An LID region spans residues Gly-126–Asp-163. An ATP-binding site is contributed by Arg-127. Zn(2+)-binding residues include Cys-130 and Cys-133. Val-136–Tyr-137 contacts ATP. The Zn(2+) site is built by Cys-150 and Asp-153. AMP-binding residues include Arg-160 and Arg-171. Gln-199 is an ATP binding site.

Belongs to the adenylate kinase family. In terms of assembly, monomer.

The protein localises to the cytoplasm. The enzyme catalyses AMP + ATP = 2 ADP. It functions in the pathway purine metabolism; AMP biosynthesis via salvage pathway; AMP from ADP: step 1/1. Its function is as follows. Catalyzes the reversible transfer of the terminal phosphate group between ATP and AMP. Plays an important role in cellular energy homeostasis and in adenine nucleotide metabolism. The protein is Adenylate kinase of Phytoplasma australiense.